A 524-amino-acid polypeptide reads, in one-letter code: uncharacterized protein (524 aa).

Residues Met1–Gly21 form the signal peptide. The N-palmitoyl cysteine moiety is linked to residue Cys22. Cys22 carries the S-diacylglycerol cysteine lipid modification.

The protein belongs to the MG067/MG068/MG395 family.

The protein resides in the cell membrane. This is an uncharacterized protein from Mycoplasma pneumoniae (strain ATCC 29342 / M129 / Subtype 1) (Mycoplasmoides pneumoniae).